The chain runs to 360 residues: Peptide chain release factor 1 (360 aa).

Glutamine 236 bears the N5-methylglutamine mark.

It belongs to the prokaryotic/mitochondrial release factor family. Methylated by PrmC. Methylation increases the termination efficiency of RF1.

It is found in the cytoplasm. In terms of biological role, peptide chain release factor 1 directs the termination of translation in response to the peptide chain termination codons UAG and UAA. In Methylococcus capsulatus (strain ATCC 33009 / NCIMB 11132 / Bath), this protein is Peptide chain release factor 1.